The primary structure comprises 380 residues: Shaggy-related protein kinase eta (380 aa).

The Protein kinase domain occupies 40 to 324; sequence YMAERVVGTG…ALEACAHPFF (285 aa). ATP is bound by residues 46–54 and Lys69; that span reads VGTGSFGIV. Thr104 carries the post-translational modification Phosphothreonine. The residue at position 105 (Ser105) is a Phosphoserine. The active-site Proton acceptor is the Asp165. Ser187 is modified (phosphoserine). Phosphotyrosine is present on Tyr200. A phosphothreonine mark is found at Thr220 and Thr261. Phosphoserine is present on Ser310. Thr314 carries the post-translational modification Phosphothreonine. The residue at position 353 (Ser353) is a Phosphoserine.

This sequence belongs to the protein kinase superfamily. CMGC Ser/Thr protein kinase family. GSK-3 subfamily. In terms of assembly, interacts in vitro with the C-terminal fragment of BZR1 and with BES1/BZR2, but not through the kinase domain. Interacts with BHLH150, beet curly top virus AL4/C4 and tomato golden mosaic virus AL4/AC4. Interacts with YDA. Interacts with MKK4. Interacts with KIB1 and KIB2 in a brassinosteroid (BR)-dependent manner. Interacts with BSK1, BSK6, BSK8 and BSK11. Binds to WRKY46, WRKY54 and WRKY70. Component of a complex made of POLAR, BASL, ASK7/BIN2 and ASK3/SK12. Binds to POLAR and BASL. Autophosphorylated mainly on threonine and serine residues. Post-translationally, ubiquitination and subsequent proteasomal degradation mediated by KIB1. As to expression, in the two outer cell layers of the developing seed coat and restricted to the suspensor cells in developing embryos. Mostly expressed in stomatal lineage cells with asymmetric cell division (ACD) potential. Observed in small cells of non-protruding hypocotyl cell files and of developing cotyledon epidermis.

It localises to the cytoplasm. The protein resides in the cell cortex. It is found in the nucleus. The protein localises to the cell membrane. It catalyses the reaction L-seryl-[protein] + ATP = O-phospho-L-seryl-[protein] + ADP + H(+). The enzyme catalyses L-threonyl-[protein] + ATP = O-phospho-L-threonyl-[protein] + ADP + H(+). Inactivated by an unknown mechanism after binding of brassinosteroids to the brassinosteroid receptor complex. Inhibited by lithium. Inhibited by dephosphorylation at Tyr-200 by BSU1. Competitive inhibition by KIB1 that reduces substrate (e.g. BZR1) access. Repressed by bikinin. Its function is as follows. Negative regulator in brassinosteroid signal transduction pathway important for plant growth. May be also involved in auxin signaling pathway. Phosphorylates and increases the degradation of BZR1 and BZR2/BES1 by the proteasome. Phosphorylates BHLH150, beet curly top virus C4 and tomato golden mosaic virus AC4 on threonine and serine residues. Upon brassinosteroid signaling, inhibits stomatal development by phosphorylating and inhibiting the MAPKK kinase YDA and the MAPK kinases MKK4 and MKK5. Phosphorylates BSK1, BSK3, BSK5, BSK6, BSK8 and BSK11 in vitro. Phoyphorylates and destabilizes WRKY46, WRKY54 and WRKY70. Mediates BASL nuclear exclusion; kinase activity is required for this function. Required first at the cortical polarity site, to restrict MAPK signaling and promote asymmetric cell division (ACD), and second in the nucleus of stomatal lineage ground cells (SLGCs) or meristemoids, to limit cell division and to promote differentiation into pavement or stomatal guard cells, respectively, likely by initiating BASL polarization. Phosphorylates BASL, YDA and SPCH in vitro and POLAR in vivo. Phosphorylates and inhibits SPCH in the nucleus of SLGC undergoing ACD, thus negatively regulating stomatal development. This is Shaggy-related protein kinase eta from Arabidopsis thaliana (Mouse-ear cress).